The chain runs to 497 residues: Alkane hydroxylase MAH1 (497 aa).

A helical membrane pass occupies residues 3–23; the sequence is MLGFYVTFIFFLVCLFTYFFL. Cys-444 contributes to the heme binding site.

This sequence belongs to the cytochrome P450 family. The cofactor is heme. In terms of tissue distribution, expressed in the expanding regions of the inflorescence stems, specifically to the epidermal pavement cells, petioles and siliques.

The protein localises to the endoplasmic reticulum membrane. Its function is as follows. Involved in the formation of secondary alcohols and ketones in stem cuticular wax. Catalyzes the hydroxylation of a methylene unit in the middle of alkane molecules to form secondary alcohols and possibly also a second hydroxylation leading to the corresponding ketones. The polypeptide is Alkane hydroxylase MAH1 (Arabidopsis thaliana (Mouse-ear cress)).